The primary structure comprises 475 residues: Bifunctional protein HldE (475 aa).

The interval 1-318 (MKVTLPDFER…ENAVRGRAET (318 aa)) is ribokinase. 195 to 198 (NLSE) contacts ATP. The active site involves D264. Positions 344–475 (MTNGVFDILH…NIIKKIQKNS (132 aa)) are cytidylyltransferase.

In the N-terminal section; belongs to the carbohydrate kinase PfkB family. It in the C-terminal section; belongs to the cytidylyltransferase family. Homodimer.

It catalyses the reaction D-glycero-beta-D-manno-heptose 7-phosphate + ATP = D-glycero-beta-D-manno-heptose 1,7-bisphosphate + ADP + H(+). The enzyme catalyses D-glycero-beta-D-manno-heptose 1-phosphate + ATP + H(+) = ADP-D-glycero-beta-D-manno-heptose + diphosphate. It participates in nucleotide-sugar biosynthesis; ADP-L-glycero-beta-D-manno-heptose biosynthesis; ADP-L-glycero-beta-D-manno-heptose from D-glycero-beta-D-manno-heptose 7-phosphate: step 1/4. Its pathway is nucleotide-sugar biosynthesis; ADP-L-glycero-beta-D-manno-heptose biosynthesis; ADP-L-glycero-beta-D-manno-heptose from D-glycero-beta-D-manno-heptose 7-phosphate: step 3/4. In terms of biological role, catalyzes the phosphorylation of D-glycero-D-manno-heptose 7-phosphate at the C-1 position to selectively form D-glycero-beta-D-manno-heptose-1,7-bisphosphate. Catalyzes the ADP transfer from ATP to D-glycero-beta-D-manno-heptose 1-phosphate, yielding ADP-D-glycero-beta-D-manno-heptose. In Cronobacter sakazakii (strain ATCC BAA-894) (Enterobacter sakazakii), this protein is Bifunctional protein HldE.